Consider the following 298-residue polypeptide: DNA repair protein RecO (298 aa).

This sequence belongs to the RecO family.

Functionally, involved in DNA repair and RecF pathway recombination. The chain is DNA repair protein RecO from Cupriavidus metallidurans (strain ATCC 43123 / DSM 2839 / NBRC 102507 / CH34) (Ralstonia metallidurans).